We begin with the raw amino-acid sequence, 2139 residues long: Voltage-dependent L-type calcium channel subunit alpha-1C (2139 aa).

The tract at residues Met1–Tyr20 is disordered. Over Met1 to Lys124 the chain is Cytoplasmic. The segment at Gly47 to Ala68 is calmodulin-binding. The disordered stretch occupies residues Ile73 to Thr98. Over residues Gln80–Lys91 the composition is skewed to basic residues. Residues Asn111–Phe408 form an I repeat. The chain crosses the membrane as a helical span at residues Pro125–Ile143. Over Tyr144–Asn158 the chain is Extracellular. The N-linked (GlcNAc...) asparagine glycan is linked to Asn153. A helical membrane pass occupies residues Leu159–Ile179. Over Ala180 to Asn188 the chain is Cytoplasmic. A helical transmembrane segment spans residues Ala189–Ser209. Residues Ala210 to Asp232 lie on the Extracellular side of the membrane. Residues Val233–Val251 traverse the membrane as a helical segment. At Pro252–Leu268 the chain is on the cytoplasmic side. A helical transmembrane segment spans residues Leu269–Phe290. The Extracellular portion of the chain corresponds to Met291–Ala350. 2 cysteine pairs are disulfide-bonded: Cys298-Cys326 and Cys316-Cys332. A glycan (N-linked (GlcNAc...) asparagine) is linked at Asn328. The pore-forming intramembrane region spans Phe351–Met372. Positions Thr361 to Gly364 match the Selectivity filter of repeat I motif. Residue Glu363 participates in Ca(2+) binding. Residues Gln373–Leu380 lie on the Extracellular side of the membrane. Residues Pro381 to Leu401 traverse the membrane as a helical segment. Topologically, residues Gly402–Asn524 are cytoplasmic. The tract at residues Gln428–Glu445 is AID/alpha-interaction domain; mediates interaction with the beta subunit. Residues Pro449–Gly481 form a disordered region. Residues Ser465–Asn478 are compositionally biased toward polar residues. At Ser469 the chain carries Phosphoserine. Thr476 bears the Phosphothreonine mark. An II repeat occupies Asn510–Leu756. Residues Val525–Ser543 traverse the membrane as a helical segment. Over Glu544 to Glu554 the chain is Extracellular. The chain crosses the membrane as a helical span at residues Val555–Met575. The Cytoplasmic portion of the chain corresponds to Tyr576–Ser586. Residues Leu587–Val606 form a helical membrane-spanning segment. Over Glu607–Gly615 the chain is Extracellular. Residues Ile616 to Trp634 form a helical membrane-spanning segment. The Cytoplasmic segment spans residues Asn635–Ser653. A helical membrane pass occupies residues Leu654–Phe673. The Extracellular segment spans residues Gly674–Pro693. Residues Gln694 to Gly715 constitute an intramembrane region (pore-forming). Residues Thr704–Asp707 carry the Selectivity filter of repeat II motif. Residue Glu706 coordinates Ca(2+). Residues Ile716–Pro725 lie on the Extracellular side of the membrane. The helical transmembrane segment at Gly726–Leu745 threads the bilayer. At Asn746 to Thr900 the chain is on the cytoplasmic side. A disordered region spans residues Ser764–Pro861. A compositionally biased stretch (basic and acidic residues) spans Ser783 to Leu806. A phosphoserine mark is found at Ser808 and Ser815. The tract at residues Ser829–Glu876 is interaction with STAC2. Positions Ala843–Glu852 are enriched in acidic residues. The III repeat unit spans residues Asn887–Phe1169. The helical transmembrane segment at Ile901–Ala919 threads the bilayer. Over Glu920 to His931 the chain is Extracellular. Residues Ile932 to Lys951 form a helical membrane-spanning segment. At Met952 to Asn967 the chain is on the cytoplasmic side. The helical transmembrane segment at Tyr968–Ile986 threads the bilayer. Residues Gln987 to Val993 are Extracellular-facing. The helical transmembrane segment at Val994 to Ala1012 threads the bilayer. The Cytoplasmic portion of the chain corresponds to Lys1013 to Asn1031. The helical transmembrane segment at Ile1032–Phe1051 threads the bilayer. The Extracellular segment spans residues Lys1052–Val1101. Residues Cys1058 and Cys1069 are joined by a disulfide bond. The segment at Arg1089–Lys1178 is dihydropyridine binding. Residues Leu1102–Tyr1122 constitute an intramembrane region (pore-forming). Residues Thr1113–Gly1116 carry the Selectivity filter of repeat III motif. Glu1115 provides a ligand contact to Ca(2+). Over Arg1123–Arg1139 the chain is Extracellular. The chain crosses the membrane as a helical span at residues Val1140–Phe1161. The Cytoplasmic portion of the chain corresponds to Val1162–Thr1219. The IV repeat unit spans residues Asn1206–Phe1479. Residues Tyr1220–Tyr1241 form a helical membrane-spanning segment. At Gly1242 to Ile1249 the chain is on the extracellular side. A helical membrane pass occupies residues Ala1250 to Ile1271. The Cytoplasmic portion of the chain corresponds to Ala1272 to Asp1281. The helical transmembrane segment at Pro1282–Ser1301 threads the bilayer. The Extracellular portion of the chain corresponds to Glu1302 to Ser1324. A helical transmembrane segment spans residues Ile1325–Gly1343. Residues Glu1344–Pro1361 lie on the Cytoplasmic side of the membrane. Residues Tyr1362 to Phe1382 traverse the membrane as a helical segment. Over Gly1383 to Gln1404 the chain is Extracellular. N-linked (GlcNAc...) asparagine glycosylation occurs at Asn1388. Residues Ala1405–Leu1423 constitute an intramembrane region (pore-forming). The Selectivity filter of repeat IV signature appears at Thr1414–Ala1417. At Ala1424 to Phe1451 the chain is on the extracellular side. The interval Lys1430 to Lys1498 is dihydropyridine binding. A disulfide bridge links Cys1431 with Cys1447. Asn1439 carries N-linked (GlcNAc...) asparagine glycosylation. Residues Glu1444–Trp1486 are phenylalkylamine binding. Residues Ala1452 to Met1476 form a helical membrane-spanning segment. At Asp1477–Leu2139 the chain is on the cytoplasmic side. The important for interaction with STAC1, STAC2 and STAC3 stretch occupies residues Asp1611–Gly1638. Positions Asp1611–Ser1644 are calmodulin-binding. Positions Lys1617–Gln1637 are calmodulin-binding IQ region. The important for localization in at the junctional membrane stretch occupies residues Leu1651–Ser1670. A phosphoserine mark is found at Ser1670 and Ser1691. Polar residues-rich tracts occupy residues Lys1732 to Glu1741 and Ser1751 to Ser1763. The tract at residues Lys1732–Thr1773 is disordered. A compositionally biased stretch (low complexity) spans Asn1764–Thr1773. A Phosphoserine; by PKA modification is found at Ser1897. Residues Arg1940–Arg1966 are disordered. The span at Phe1947–Thr1957 shows a compositional bias: pro residues.

This sequence belongs to the calcium channel alpha-1 subunit (TC 1.A.1.11) family. CACNA1C subfamily. In terms of assembly, component of a calcium channel complex consisting of a pore-forming alpha subunit (CACNA1C) and ancillary beta, gamma and delta subunits. The channel complex contains alpha, beta, gamma and delta subunits in a 1:1:1:1 ratio, i.e. it contains only one of each type of subunit. CACNA1C channel activity is modulated by ancillary subunits, such as CACNB1, CACNB2, CACNB3, CACNA2D1 and CACNA2D4. Interacts with the gamma subunits CACNG4, CACNG6, CACNG7 and CACNG8. Interacts with CACNB1. Interacts with CACNB2. Identified in a complex with CACNA2D4 and CACNB3. Interacts with CACNB3. Interacts with CACNA2D1. Interacts with CACNA2D4. Interacts with CALM1. Interacts (via the N-terminus and the C-terminal C and IQ motifs) with CABP1; this inhibits Ca(2+)-dependent channel inactivation. The binding via the C motif is calcium independent whereas the binding via IQ requires the presence of calcium and is mutually exclusive with calmodulin binding. The binding to the cytoplasmic N-terminal domain is calcium independent but is essential for the channel modulation. Interacts (via C-terminal CDB motif) with CABP5; in a calcium-dependent manner. Interacts with CIB1; the interaction increases upon cardiomyocytes hypertrophy. Interacts with STAC2 and STAC3; this inhibits channel inactivation. In terms of processing, phosphorylation by PKA at Ser-1897 activates the channel. Elevated levels of blood glucose lead to increased phosphorylation by PKA. As to expression, detected in embryonic heart. Detected in retina in rod bipolar cells. Detected in tibialis artery (at protein level). Detected in smooth muscle cells from tibialis artery and in mesenteric artery. High expression in heart, followed by brain and spinal cord.

It is found in the cell membrane. The protein localises to the sarcolemma. The protein resides in the perikaryon. Its subcellular location is the postsynaptic density membrane. It localises to the cell projection. It is found in the dendrite. The protein localises to the T-tubule. The catalysed reaction is Ca(2+)(in) = Ca(2+)(out). Inhibited by dihydropyridines (DHP), such as isradipine. Inhibited by nifedipine. Channel activity is regulated by Ca(2+) and calmodulin. Binding of STAC1, STAC2 or STAC3 to a region that overlaps with the calmodulin binding site inhibits channel inactivation by Ca(2+) and calmodulin. Binding of calmodulin or CABP1 at the same regulatory sites results in opposite effects on the channel function. Shear stress and pressure increases calcium channel activity. Pore-forming, alpha-1C subunit of the voltage-gated calcium channel that gives rise to L-type calcium currents. Mediates influx of calcium ions into the cytoplasm, and thereby triggers calcium release from the sarcoplasm. Plays an important role in excitation-contraction coupling in the heart. Required for normal heart development and normal regulation of heart rhythm. Required for normal contraction of smooth muscle cells in blood vessels and in the intestine. Essential for normal blood pressure regulation via its role in the contraction of arterial smooth muscle cells. Long-lasting (L-type) calcium channels belong to the 'high-voltage activated' (HVA) group. The polypeptide is Voltage-dependent L-type calcium channel subunit alpha-1C (Cacna1c) (Mus musculus (Mouse)).